A 578-amino-acid polypeptide reads, in one-letter code: Protein SIA1 (578 aa).

The signal sequence occupies residues 1–28; that stretch reads MFRNRRILLYARRFFLVWICFLFITSWS.

In terms of biological role, may be involved in the activation of the plasma membrane proton-ATPase by glucose. The sequence is that of Protein SIA1 (SIA1) from Kluyveromyces lactis (strain ATCC 8585 / CBS 2359 / DSM 70799 / NBRC 1267 / NRRL Y-1140 / WM37) (Yeast).